Consider the following 164-residue polypeptide: Cyanate hydratase (164 aa).

Residues Arg-104, Glu-107, and Ser-130 contribute to the active site.

It belongs to the cyanase family.

It catalyses the reaction cyanate + hydrogencarbonate + 3 H(+) = NH4(+) + 2 CO2. Functionally, catalyzes the reaction of cyanate with bicarbonate to produce ammonia and carbon dioxide. The chain is Cyanate hydratase from Botryotinia fuckeliana (strain B05.10) (Noble rot fungus).